Reading from the N-terminus, the 151-residue chain is Macrodomain Ter protein (151 aa).

Belongs to the MatP family. As to quaternary structure, homodimer.

It localises to the cytoplasm. Required for spatial organization of the terminus region of the chromosome (Ter macrodomain) during the cell cycle. Prevents early segregation of duplicated Ter macrodomains during cell division. Binds specifically to matS, which is a 13 bp signature motif repeated within the Ter macrodomain. The polypeptide is Macrodomain Ter protein (Yersinia pseudotuberculosis serotype IB (strain PB1/+)).